The chain runs to 368 residues: Phosphate acyltransferase (368 aa).

The segment at 337–368 is disordered; the sequence is LGDGEHDAGGAGQASPAAGHHAEPSAAQSSKA.

It belongs to the PlsX family. Homodimer. Probably interacts with PlsY.

The protein localises to the cytoplasm. It carries out the reaction a fatty acyl-[ACP] + phosphate = an acyl phosphate + holo-[ACP]. The protein operates within lipid metabolism; phospholipid metabolism. Its function is as follows. Catalyzes the reversible formation of acyl-phosphate (acyl-PO(4)) from acyl-[acyl-carrier-protein] (acyl-ACP). This enzyme utilizes acyl-ACP as fatty acyl donor, but not acyl-CoA. The sequence is that of Phosphate acyltransferase from Burkholderia orbicola (strain MC0-3).